We begin with the raw amino-acid sequence, 186 residues long: Nicotinamide-nucleotide adenylyltransferase (186 aa).

This sequence belongs to the archaeal NMN adenylyltransferase family.

It is found in the cytoplasm. The catalysed reaction is beta-nicotinamide D-ribonucleotide + ATP + H(+) = diphosphate + NAD(+). Its pathway is cofactor biosynthesis; NAD(+) biosynthesis; NAD(+) from nicotinamide D-ribonucleotide: step 1/1. This Pyrococcus horikoshii (strain ATCC 700860 / DSM 12428 / JCM 9974 / NBRC 100139 / OT-3) protein is Nicotinamide-nucleotide adenylyltransferase.